Here is a 449-residue protein sequence, read N- to C-terminus: Nucleoprotein (449 aa).

A disordered region spans residues 1-55 (MSFTPGKQSSSRASSGNRSGNGILKWADQSDQSRNVQTRGRRVQSKQTATSQQPS). Residues 9–22 (SSSRASSGNRSGNG) are compositionally biased toward low complexity. Polar residues-rich tracts occupy residues 29-38 (QSDQSRNVQT) and 45-55 (SKQTATSQQPS). Positions 52–194 (QQPSGGTVVP…GYYIEGSGRS (143 aa)) are RNA-binding. Residues 61-190 (PYYSWFSGIT…VLPQGYYIEG (130 aa)) form the CoV N NTD domain. RNA contacts are provided by Arg-106, Arg-122, and Arg-164. Disordered regions lie at residues 158-231 (PADI…VTPD), 266-297 (ILNK…NFGG), and 387-449 (MMNI…TSEI). Position 167 is a phosphoserine; by host (Ser-167). Thr-174 is subject to Phosphothreonine; by host. Phosphoserine; by host is present on Ser-191. 2 stretches are compositionally biased toward polar residues: residues 194 to 204 (SAPNSRSTSRA) and 212 to 227 (GSRS…STPG). The CoV N CTD domain maps to 259–384 (AKEVRQKILN…QNLNAYQHQE (126 aa)). Over residues 266–276 (ILNKPRQKRSP) the composition is skewed to basic residues. A dimerization region spans residues 266 to 385 (ILNKPRQKRS…NLNAYQHQED (120 aa)). Position 391 is a phosphoserine; by host (Ser-391). Residues 400–410 (QKNGQVENDNV) are compositionally biased toward polar residues. Residues 423-440 (KSRELTAEDISLLKKMDE) are compositionally biased toward basic and acidic residues. The residue at position 424 (Ser-424) is a Phosphoserine; by host. Thr-428 is subject to Phosphothreonine; by host.

It belongs to the betacoronavirus nucleocapsid protein family. In terms of assembly, homooligomer. Both monomeric and oligomeric forms interact with RNA. Interacts with protein M. Interacts with NSP3; this interaction serves to tether the genome to the newly translated replicase-transcriptase complex at a very early stage of infection. ADP-ribosylated. The ADP-ribosylation is retained in the virion during infection. In terms of processing, phosphorylated on serine and threonine residues.

It is found in the virion. Its subcellular location is the host endoplasmic reticulum-Golgi intermediate compartment. The protein localises to the host Golgi apparatus. Its function is as follows. Packages the positive strand viral genome RNA into a helical ribonucleocapsid (RNP) and plays a fundamental role during virion assembly through its interactions with the viral genome and membrane protein M. Plays an important role in enhancing the efficiency of subgenomic viral RNA transcription as well as viral replication. This chain is Nucleoprotein, found in Sus scrofa (Pig).